The following is a 204-amino-acid chain: Ubiquitin-conjugating enzyme E2 T (204 aa).

In terms of domain architecture, UBC core spans 2 to 152 (QRASRLKKEL…AKQWTEAHAR (151 aa)). Cys-86 (glycyl thioester intermediate) is an active-site residue. Residues Lys-91 and Lys-181 each participate in a glycyl lysine isopeptide (Lys-Gly) (interchain with G-Cter in ubiquitin) cross-link. Positions 150 to 204 (HARQKQKADEEELGTSSEVGDSEESHSTQKRKARPLGGMEKKFSPDVQRVYPGPS) are disordered. Residues Lys-190 and Lys-191 each participate in a glycyl lysine isopeptide (Lys-Gly) (interchain with G-Cter in SUMO2) cross-link. Ser-193 carries the post-translational modification Phosphoserine.

This sequence belongs to the ubiquitin-conjugating enzyme family. Interacts with FANCL and BRCA1. Post-translationally, auto-ubiquitinated. Effects of auto-monoubiquitination at Lys-91 and Lys-181 are unclear.

Its subcellular location is the nucleus. The catalysed reaction is S-ubiquitinyl-[E1 ubiquitin-activating enzyme]-L-cysteine + [E2 ubiquitin-conjugating enzyme]-L-cysteine = [E1 ubiquitin-activating enzyme]-L-cysteine + S-ubiquitinyl-[E2 ubiquitin-conjugating enzyme]-L-cysteine.. It participates in protein modification; protein ubiquitination. Accepts ubiquitin from the E1 complex and catalyzes its covalent attachment to other proteins. Catalyzes monoubiquitination. Involved in mitomycin-C (MMC)-induced DNA repair: acts as a specific E2 ubiquitin-conjugating enzyme for the Fanconi anemia complex by associating with E3 ubiquitin-protein ligase FANCL and catalyzing monoubiquitination of FANCD2, a key step in the DNA damage pathway. Also mediates monoubiquitination of FANCL and FANCI. May contribute to ubiquitination and degradation of BRCA1. In vitro able to promote polyubiquitination using all 7 ubiquitin Lys residues, but may prefer 'Lys-11'-, 'Lys-27'-, 'Lys-48'- and 'Lys-63'-linked polyubiquitination. This Mus musculus (Mouse) protein is Ubiquitin-conjugating enzyme E2 T (Ube2t).